A 457-amino-acid polypeptide reads, in one-letter code: Variant surface glycoprotein 20 (457 aa).

Positions 1 to 20 (MFTQAVIALIGLVSIRTGKT) are cleaved as a signal peptide. A compositionally biased stretch (polar residues) spans 385–397 (RQTASGDDQSAEN). The interval 385-406 (RQTASGDDQSAENQCGGKKEDE) is disordered. N-linked (GlcNAc...) asparagine glycosylation occurs at Asn436. Ser440 carries the GPI-anchor amidated serine lipid modification. A propeptide spans 441 to 457 (NSFVIKKAPLWLAFLLF) (removed in mature form).

It localises to the cell membrane. Its function is as follows. VSG forms a coat on the surface of the parasite. The trypanosome evades the immune response of the host by expressing a series of antigenically distinct VSGs from an estimated 1000 VSG genes. This Trypanosoma equiperdum protein is Variant surface glycoprotein 20.